A 673-amino-acid chain; its full sequence is Thimet-like oligopeptidase (673 aa).

His-465 is a Zn(2+) binding site. Residue Glu-466 is part of the active site. Zn(2+)-binding residues include His-469 and His-472.

This sequence belongs to the peptidase M3 family. Zn(2+) is required as a cofactor.

The sequence is that of Thimet-like oligopeptidase from Dictyostelium discoideum (Social amoeba).